The following is a 669-amino-acid chain: MGKDIKDEILSLRDAIKKWDREYYVDSSPTVGDVTYDKALLRLQYLENRYPEYKTLDSPTLKFGSDLLNDFKEVEHSYPILSLDKAYDVKELLLWVEKMSLEGSNLGFDMGISAEPKIDGCSIVLYYKDGILEKALTRGDGRFGNNVIENVRTIKNVPLCIGERVELVLRGEIYITKKDFLKINHTLDDSYINARNLTSGILRRINSREVVNFPLDIFVYDILYSSLELNTNHDAFDKLKHFGFKLNPFCKFFCGKNLGENIINYVKEIEEQRERFEYEIDGVVLKVDDFRLRDVLGYTSHHPKWSIAYKFESLRAVSKVIDIVVQVGRSGKITPVANIEKVLIAGAFITSASLHNQDYIDSIGLNVKDVVAISRRGDVIPAVELVVEKLSVGNFKIPNYCPSCKKSLIKEGAHLFCVNIHCPLKIMGHIKYFCSKKCMNIVGLSEKTIEFLFNMNFISSEIDLYTFDFDRLIGLKGFNFKRVNKLKRSIEESKNRPFKKLLLAMGIKDLGINTILLLINNNLNSFDAISLLCQDNKNALVKLLDIKGIGERIAFNIIRAFNDKIILDKFNFFKGLGFKMQEDSINCVVDSSFLFGKKFCITGSFDEYPRHVLIDKITKKGAIFNSSVSRYLDFLLVGKSPGLKLKKANNLGIKILSLFDIKNLVNLDD.

NAD(+) is bound by residues 33 to 37, 82 to 83, and Glu115; these read DVTYD and SL. The active-site N6-AMP-lysine intermediate is the Lys117. NAD(+) contacts are provided by Arg138, Glu172, Lys286, and Lys310. Zn(2+)-binding residues include Cys401, Cys404, Cys417, and Cys422. The BRCT domain maps to 589-669; the sequence is VDSSFLFGKK…DIKNLVNLDD (81 aa).

The protein belongs to the NAD-dependent DNA ligase family. LigA subfamily. Mg(2+) is required as a cofactor. It depends on Mn(2+) as a cofactor.

The catalysed reaction is NAD(+) + (deoxyribonucleotide)n-3'-hydroxyl + 5'-phospho-(deoxyribonucleotide)m = (deoxyribonucleotide)n+m + AMP + beta-nicotinamide D-nucleotide.. In terms of biological role, DNA ligase that catalyzes the formation of phosphodiester linkages between 5'-phosphoryl and 3'-hydroxyl groups in double-stranded DNA using NAD as a coenzyme and as the energy source for the reaction. It is essential for DNA replication and repair of damaged DNA. This Borrelia duttonii (strain Ly) protein is DNA ligase.